We begin with the raw amino-acid sequence, 254 residues long: Receptor expression-enhancing protein 2 (254 aa).

Transmembrane regions (helical) follow at residues 1 to 21 (MVSW…YPAY) and 35 to 55 (YVKW…ETLT). Phosphoserine is present on S152. Residues 164–254 (ALPLQGPDGR…KKTSAGGDSA (91 aa)) form a disordered region. Residues 195-204 (SVRSGTNQAD) show a composition bias toward polar residues. Residues 205 to 219 (PRTEISEDDTGDKAP) show a composition bias toward basic and acidic residues.

The protein belongs to the DP1 family. As to quaternary structure, interacts with odorant receptor proteins.

It localises to the membrane. Its function is as follows. Required for endoplasmic reticulum (ER) network formation, shaping and remodeling. May enhance the cell surface expression of odorant receptors. This chain is Receptor expression-enhancing protein 2 (REEP2), found in Bos taurus (Bovine).